An 878-amino-acid chain; its full sequence is Alanine--tRNA ligase (878 aa).

Zn(2+) contacts are provided by H564, H568, C666, and H670.

Belongs to the class-II aminoacyl-tRNA synthetase family. Homotetramer. Requires Zn(2+) as cofactor.

Its subcellular location is the cytoplasm. The enzyme catalyses tRNA(Ala) + L-alanine + ATP = L-alanyl-tRNA(Ala) + AMP + diphosphate. Catalyzes the attachment of alanine to tRNA(Ala) in a two-step reaction: alanine is first activated by ATP to form Ala-AMP and then transferred to the acceptor end of tRNA(Ala). Also edits incorrectly charged Ser-tRNA(Ala) and Gly-tRNA(Ala) via its editing domain. This Buchnera aphidicola subsp. Acyrthosiphon pisum (strain APS) (Acyrthosiphon pisum symbiotic bacterium) protein is Alanine--tRNA ligase.